A 145-amino-acid chain; its full sequence is Holo-[acyl-carrier-protein] synthase (145 aa).

Mg(2+)-binding residues include Asp-9 and Glu-59.

It belongs to the P-Pant transferase superfamily. AcpS family. Mg(2+) serves as cofactor.

The protein resides in the cytoplasm. The enzyme catalyses apo-[ACP] + CoA = holo-[ACP] + adenosine 3',5'-bisphosphate + H(+). Functionally, transfers the 4'-phosphopantetheine moiety from coenzyme A to a Ser of acyl-carrier-protein. The protein is Holo-[acyl-carrier-protein] synthase of Nocardia farcinica (strain IFM 10152).